Here is a 237-residue protein sequence, read N- to C-terminus: Dihydroceramide fatty acyl 2-hydroxylase FAH2 (237 aa).

Transmembrane regions (helical) follow at residues 54–74 and 77–97; these read VWWAIPTIWLPVVCYVLSISA and GLTFPQIGLIVAFGVLTWTLL. Residues H102, H107, H123, H126, and H127 each contribute to the Zn(2+) site. Transmembrane regions (helical) follow at residues 134–154 and 156–176; these read LRLVFPPTATAILLVPLWKLL and LLATPATAPAILGGILFGYVM. Zn(2+) is bound by residues H181, H185, H201, H204, and H205.

Belongs to the sterol desaturase family. Interacts with CYTB5-A, CYTB5-B, CYTB5-C and CYTB5-D. It depends on Zn(2+) as a cofactor. As to expression, expressed in leaves, roots, flowers and seeds.

It localises to the endoplasmic reticulum membrane. It catalyses the reaction an N-(1,2-saturated acyl)sphinganine + 2 Fe(II)-[cytochrome b5] + O2 + 2 H(+) = an N-[(2'R)-hydroxyacyl]sphinganine + 2 Fe(III)-[cytochrome b5] + H2O. Fatty acid 2-hydroxylase involved in the alpha-hydroxylation of the long-chain fatty acid (LCFA) palmitic acid. Probably involved in the resistance response to oxidative stress. This Arabidopsis thaliana (Mouse-ear cress) protein is Dihydroceramide fatty acyl 2-hydroxylase FAH2.